The chain runs to 22 residues: Unknown protein 10 (22 aa).

The chain is Unknown protein 10 from Pseudotsuga menziesii (Douglas-fir).